The sequence spans 168 residues: Crossover junction endodeoxyribonuclease RuvC (168 aa).

Active-site residues include Asp8, Glu68, and Asp140. Residues Asp8, Glu68, and Asp140 each contribute to the Mg(2+) site.

This sequence belongs to the RuvC family. In terms of assembly, homodimer which binds Holliday junction (HJ) DNA. The HJ becomes 2-fold symmetrical on binding to RuvC with unstacked arms; it has a different conformation from HJ DNA in complex with RuvA. In the full resolvosome a probable DNA-RuvA(4)-RuvB(12)-RuvC(2) complex forms which resolves the HJ. Mg(2+) serves as cofactor.

The protein resides in the cytoplasm. It carries out the reaction Endonucleolytic cleavage at a junction such as a reciprocal single-stranded crossover between two homologous DNA duplexes (Holliday junction).. Its function is as follows. The RuvA-RuvB-RuvC complex processes Holliday junction (HJ) DNA during genetic recombination and DNA repair. Endonuclease that resolves HJ intermediates. Cleaves cruciform DNA by making single-stranded nicks across the HJ at symmetrical positions within the homologous arms, yielding a 5'-phosphate and a 3'-hydroxyl group; requires a central core of homology in the junction. The consensus cleavage sequence is 5'-(A/T)TT(C/G)-3'. Cleavage occurs on the 3'-side of the TT dinucleotide at the point of strand exchange. HJ branch migration catalyzed by RuvA-RuvB allows RuvC to scan DNA until it finds its consensus sequence, where it cleaves and resolves the cruciform DNA. In Lawsonia intracellularis (strain PHE/MN1-00), this protein is Crossover junction endodeoxyribonuclease RuvC.